Consider the following 268-residue polypeptide: Small ribosomal subunit protein eS1 (268 aa).

The interval 1 to 21 is disordered; the sequence is MAVGKNKGLSKGGKKGGKKKV.

It belongs to the eukaryotic ribosomal protein eS1 family. Component of the small ribosomal subunit. Mature ribosomes consist of a small (40S) and a large (60S) subunit. The 40S subunit contains about 33 different proteins and 1 molecule of RNA (18S). The 60S subunit contains about 49 different proteins and 3 molecules of RNA (28S, 5.8S and 5S).

Its subcellular location is the cytoplasm. In terms of biological role, essential for oogenesis; required for late follicle cell development. This Drosophila erecta (Fruit fly) protein is Small ribosomal subunit protein eS1.